A 248-amino-acid chain; its full sequence is Probable phosphatase VCM66_A0854 (248 aa).

Positions 8, 10, 16, 41, 74, 102, 132, 194, and 196 each coordinate Zn(2+).

Belongs to the PHP family. Requires Zn(2+) as cofactor.

This chain is Probable phosphatase VCM66_A0854, found in Vibrio cholerae serotype O1 (strain M66-2).